The following is a 414-amino-acid chain: Putative ankyrin repeat protein BB_B28 (414 aa).

ANK repeat units lie at residues 326 to 355 (NGNP…NINL) and 359 to 389 (NSQT…NPNI).

This Borreliella burgdorferi (strain ATCC 35210 / DSM 4680 / CIP 102532 / B31) (Borrelia burgdorferi) protein is Putative ankyrin repeat protein BB_B28.